The sequence spans 1073 residues: Serine/threonine-protein phosphatase 6 regulatory ankyrin repeat subunit C (1073 aa).

ANK repeat units follow at residues 7–36, 40–69, 73–102, 106–135, 139–168, 172–201, 205–234, 238–267, 271–301, 305–334, 338–367, 371–400, 422–451, 455–484, 488–544, 548–578, 583–612, 616–645, 650–679, 686–715, 719–748, 752–781, 789–818, 821–851, 856–885, 889–919, 923–952, and 959–988; these read TDQPPLVQAIFNRDVEEVRSLLNQKENINV, ERRTPLHTAAYIGDVAILELLILSGANVNA, VWLTPLHRAAASRNEKALHLLLKHSADVNA, YWQTPLHVAAANRATKCVEAIIPLLSTVNV, TGRTALHHAVHSGHLEMVNLLLNKGASLST, KDRQPIHWAAFLGHLEVLKLLVARGADVMC, KGYTLLHTAAASGQIEVVRHLLRLGVEIDE, FGNTALHIACYMGQDAVANELVNYGANVNQ, KGFTPLHFAAVSTNGALCLELLVNNGADVNF, EGKSPLHMAAIHGRFTRSQILIQNGSEIDC, YGNTPLHVAARYGHELLISTLMTNGADTAR, HDMFPLHLAVLFGFSDCCRKLLSSGQLYSI, LGRTCLHAAASGGNVECLNLLLSSGADLRR, FGRTPLHYAAANGSYQCTVTLVTAGASINE, KGCT…DPSL, QGYTAVHYAAAYGNRQNLELLLEMSFNCLED, IPVSPLHLAAYNGHCEALKTLAETLVNLDV, KGRTALYLATERGSTECVEVLTSHGASALV, RKWTPLHAAAANGNTDSLHLLIDSGERADI, HGQTPLMLAIMNGHVDCVHLLLEKGSTADA, RGRTALHRGAVTGCEDCLAALLDHDAFVLC, KGRTPIHFASACGHLEILRTLLQAALSTDP, SGYSPMHWASYSGHEDCLELLLEHNPFAYL, NPFTPLHCAVINNQDSTAEMLVEALGAKIVN, KGRTPLHAAAFADNIHGLQLLLRHQAEVDT, LGRTPLMMASENGHTAAVEFLLYQAKANITV, NKNTALHLACSKGHEKCALLILGETQDLGL, and ALQMPLHIAARNGLATVVQALLSRGATVLA.

In terms of assembly, protein phosphatase 6 (PP6) holoenzyme is proposed to be a heterotrimeric complex formed by the catalytic subunit, a SAPS domain-containing subunit (PP6R) and an ankyrin repeat-domain containing regulatory subunit (ARS).

In terms of biological role, putative regulatory subunit of protein phosphatase 6 (PP6) that may be involved in the recognition of phosphoprotein substrates. The polypeptide is Serine/threonine-protein phosphatase 6 regulatory ankyrin repeat subunit C (ANKRD52) (Gallus gallus (Chicken)).